A 160-amino-acid chain; its full sequence is Ribosomal RNA large subunit methyltransferase H (160 aa).

S-adenosyl-L-methionine-binding residues include L76 and G108.

Belongs to the RNA methyltransferase RlmH family. As to quaternary structure, homodimer.

The protein resides in the cytoplasm. The enzyme catalyses pseudouridine(1915) in 23S rRNA + S-adenosyl-L-methionine = N(3)-methylpseudouridine(1915) in 23S rRNA + S-adenosyl-L-homocysteine + H(+). Functionally, specifically methylates the pseudouridine at position 1915 (m3Psi1915) in 23S rRNA. The chain is Ribosomal RNA large subunit methyltransferase H from Rhodopseudomonas palustris (strain BisB18).